The primary structure comprises 278 residues: Large ribosomal subunit protein uL2 (278 aa).

Disordered regions lie at residues P29–G55 and V225–R278. Residues R258–R278 are compositionally biased toward basic residues.

The protein belongs to the universal ribosomal protein uL2 family. As to quaternary structure, part of the 50S ribosomal subunit. Forms a bridge to the 30S subunit in the 70S ribosome. Post-translationally, the N-terminus is blocked. In terms of processing, phosphorylated on serine and threonine residues.

Functionally, one of the primary rRNA binding proteins. Required for association of the 30S and 50S subunits to form the 70S ribosome, for tRNA binding and peptide bond formation. It has been suggested to have peptidyltransferase activity; this is somewhat controversial. Makes several contacts with the 16S rRNA in the 70S ribosome. This Streptomyces collinus protein is Large ribosomal subunit protein uL2.